Reading from the N-terminus, the 130-residue chain is Small ribosomal subunit protein uS4 (130 aa).

Lys64 is subject to N6-acetyllysine. A Glycyl lysine isopeptide (Lys-Gly) (interchain with G-Cter in SUMO2) cross-link involves residue Lys91. In terms of domain architecture, S4 RNA-binding spans Arg106–Gln130. Residue Lys114 is modified to N6-acetyllysine.

It belongs to the universal ribosomal protein uS4 family. As to quaternary structure, component of the small ribosomal subunit. Identified in a IGF2BP1-dependent mRNP granule complex containing untranslated mRNAs. Part of the small subunit (SSU) processome, composed of more than 70 proteins and the RNA chaperone small nucleolar RNA (snoRNA) U3.

Its subcellular location is the cytoplasm. The protein localises to the nucleus. It is found in the nucleolus. In terms of biological role, component of the small ribosomal subunit. The ribosome is a large ribonucleoprotein complex responsible for the synthesis of proteins in the cell. Part of the small subunit (SSU) processome, first precursor of the small eukaryotic ribosomal subunit. During the assembly of the SSU processome in the nucleolus, many ribosome biogenesis factors, an RNA chaperone and ribosomal proteins associate with the nascent pre-rRNA and work in concert to generate RNA folding, modifications, rearrangements and cleavage as well as targeted degradation of pre-ribosomal RNA by the RNA exosome. The chain is Small ribosomal subunit protein uS4 (RPS9) from Sus scrofa (Pig).